A 130-amino-acid chain; its full sequence is Holin-like protein CidA (130 aa).

A run of 4 helical transmembrane segments spans residues 6–26, 31–51, 65–85, and 93–113; these read FVIKLILQLALIMLITFIGTE, LHIPLAGSIVGLMLFFLLLQF, FLLKTMVFFFIPSVVGIMDVA, and ILFFIVIIIGTCLVALSSGYI.

Belongs to the CidA/LrgA family. CidA subfamily.

The protein localises to the cell membrane. Functionally, increases the activity of extracellular murein hydrolases possibly by mediating their export via hole formation. Inhibited by the antiholin-like proteins LrgAB. In an unstressed cell, the LrgAB products probably inhibit the function of the CidAB proteins. When a cell is stressed by the addition of antibiotics or by other factors in the environment, the CidAB proteins possibly oligomerize within the bacterial cell membrane, creating lesions that disrupt the proton motive force, which in turn results in loss of cell viability. These lesions are also hypothesized to regulate the subsequent cell lysis by either allowing the murein hydrolases access to the cell wall substrate and/or regulating their activity by a possible change in the cell wall pH that results from loss of membrane potential. This chain is Holin-like protein CidA, found in Staphylococcus epidermidis (strain ATCC 35984 / DSM 28319 / BCRC 17069 / CCUG 31568 / BM 3577 / RP62A).